Here is a 743-residue protein sequence, read N- to C-terminus: ABC-type transporter claG (743 aa).

2 N-linked (GlcNAc...) asparagine glycosylation sites follow: Asn-4 and Asn-30. Residues 124–144 form a helical membrane-spanning segment; that stretch reads SILLDIFLVIVVSWPFPFAWI. The N-linked (GlcNAc...) asparagine glycan is linked to Asn-159. The 240-residue stretch at 200 to 439 folds into the ABC transporter domain; it reads VEFSGISMRP…FQDAGYTFPL (240 aa). 234 to 241 serves as a coordination point for ATP; sequence GPSGSGKS. Transmembrane regions (helical) follow at residues 507–527, 560–580, 611–631, 636–656, and 661–681; these read YPSF…IGLS, GMLL…KTFG, IFLS…PIVS, LIVN…ISAI, and NGPL…GCAP.

Belongs to the ABC transporter superfamily. ABCG family.

The protein resides in the membrane. Functionally, ABC-type transporter; part of the cla gene cluster that produces clavatol and ortho-quinone methide. The clavatol biosynthesis cluster cla and the terrestric acid cluster tra are both involved in the production of peniphenones and penilactones. The sequence is that of ABC-type transporter claG from Penicillium crustosum (Blue mold fungus).